Reading from the N-terminus, the 530-residue chain is Calcium/calmodulin-dependent protein kinase type II alpha chain (530 aa).

Residues 12–272 (DNYDIKEELG…AAEALKHPWI (261 aa)) form the Protein kinase domain. ATP-binding positions include 20-28 (LGKGAFSIV) and Lys-43. The active-site Proton acceptor is Asp-136. Thr-287 is modified (phosphothreonine; by autocatalysis). The tract at residues 291–301 (LKKFNARRKLK) is calmodulin-binding. Thr-306 and Thr-307 each carry phosphothreonine; by autocatalysis. Residues 320 to 358 (ITKKGEGSQVKESTDSSSTTLEDDDIKEDKKGTVDRSTT) form a disordered region. Phosphoserine is present on Ser-327.

It belongs to the protein kinase superfamily. CAMK Ser/Thr protein kinase family. CaMK subfamily. Interacts with CASK. In terms of processing, autophosphorylation at Thr-287 is independent of autophosphorylation at Thr-306 and Thr-307. Expressed at a high level in the central nervous system during the late embryonic stage. In adults, expression is more abundant in the head than in the body.

It catalyses the reaction L-seryl-[protein] + ATP = O-phospho-L-seryl-[protein] + ADP + H(+). It carries out the reaction L-threonyl-[protein] + ATP = O-phospho-L-threonyl-[protein] + ADP + H(+). With respect to regulation, CASK plays a role in regulation of CaMKII autophosphorylation. When complexed with CASK and in the presence Ca[2+]/CaM, autophosphorylation of Thr-287 causes constitutive activation of the kinase. In the absence of Ca[2+]/CaM, autophosphorylation of Thr-306 causes inactivation of the kinase. A key regulator of plasticity in synaptic physiology and behavior, alterations in its activity produce pleiotrophic effects that involve synaptic transmission and development as well as various aspects of behavior. Directly modulates eag potassium channels. The polypeptide is Calcium/calmodulin-dependent protein kinase type II alpha chain (CaMKII) (Drosophila melanogaster (Fruit fly)).